A 245-amino-acid chain; its full sequence is 5'-nucleotidase SurE (245 aa).

A divalent metal cation is bound by residues aspartate 8, aspartate 9, serine 39, and asparagine 91.

This sequence belongs to the SurE nucleotidase family. It depends on a divalent metal cation as a cofactor.

Its subcellular location is the cytoplasm. It catalyses the reaction a ribonucleoside 5'-phosphate + H2O = a ribonucleoside + phosphate. In terms of biological role, nucleotidase that shows phosphatase activity on nucleoside 5'-monophosphates. In Psychromonas ingrahamii (strain DSM 17664 / CCUG 51855 / 37), this protein is 5'-nucleotidase SurE.